Consider the following 327-residue polypeptide: MTHTLRVIFAGTPEFAAAALAAIHEAGFPVPLVLTQPDRPAGRGMKLQASAVKRYAVEHGMPVAQPPSLRRAGKFPAEAAEAIELLRATPHDVMVVAAYGLLLPQEVLDIPRAGCINIHASLLPRWRGAAPIHRAIEAGDAETGVTLMQMDVGLDTGAMIDEARIAIAPDDTTATLHDRLAADGARLIVAALERLERDGALPATPQPADGVTYAEKIGKHEAALDWRKAADVLARQVRAFDPFPGGVATLDGAAIKLWAAEPVAARGDAAPGTIVEAAPEGVIVACGAGALRVTQLQKPGGKRLPAREFLAGSPLAAGQRFALPDAA.

A (6S)-5,6,7,8-tetrahydrofolate-binding site is contributed by 121-124; the sequence is SLLP.

Belongs to the Fmt family.

It carries out the reaction L-methionyl-tRNA(fMet) + (6R)-10-formyltetrahydrofolate = N-formyl-L-methionyl-tRNA(fMet) + (6S)-5,6,7,8-tetrahydrofolate + H(+). Its function is as follows. Attaches a formyl group to the free amino group of methionyl-tRNA(fMet). The formyl group appears to play a dual role in the initiator identity of N-formylmethionyl-tRNA by promoting its recognition by IF2 and preventing the misappropriation of this tRNA by the elongation apparatus. The protein is Methionyl-tRNA formyltransferase of Burkholderia vietnamiensis (strain G4 / LMG 22486) (Burkholderia cepacia (strain R1808)).